Reading from the N-terminus, the 436-residue chain is Cyclic nucleotide-binding domain-containing protein 1 (436 aa).

Basic and acidic residues predominate over residues Glu89–Pro105. The interval Glu89–Ser108 is disordered. Tyr322–Ala436 lines the a nucleoside 3',5'-cyclic phosphate pocket.

The sequence is that of Cyclic nucleotide-binding domain-containing protein 1 (CNBD1) from Homo sapiens (Human).